A 400-amino-acid chain; its full sequence is CCA-adding enzyme (400 aa).

Residues glycine 28 and arginine 31 each contribute to the ATP site. Residues glycine 28 and arginine 31 each contribute to the CTP site. Mg(2+) contacts are provided by aspartate 41 and aspartate 43. ATP-binding residues include arginine 112, aspartate 155, arginine 158, arginine 161, and arginine 164. Residues arginine 112, aspartate 155, arginine 158, arginine 161, and arginine 164 each coordinate CTP.

It belongs to the tRNA nucleotidyltransferase/poly(A) polymerase family. Bacterial CCA-adding enzyme type 3 subfamily. As to quaternary structure, homodimer. Mg(2+) serves as cofactor.

The enzyme catalyses a tRNA precursor + 2 CTP + ATP = a tRNA with a 3' CCA end + 3 diphosphate. It catalyses the reaction a tRNA with a 3' CCA end + 2 CTP + ATP = a tRNA with a 3' CCACCA end + 3 diphosphate. Functionally, catalyzes the addition and repair of the essential 3'-terminal CCA sequence in tRNAs without using a nucleic acid template. Adds these three nucleotides in the order of C, C, and A to the tRNA nucleotide-73, using CTP and ATP as substrates and producing inorganic pyrophosphate. tRNA 3'-terminal CCA addition is required both for tRNA processing and repair. Also involved in tRNA surveillance by mediating tandem CCA addition to generate a CCACCA at the 3' terminus of unstable tRNAs. While stable tRNAs receive only 3'-terminal CCA, unstable tRNAs are marked with CCACCA and rapidly degraded. In Staphylococcus aureus (strain bovine RF122 / ET3-1), this protein is CCA-adding enzyme.